A 362-amino-acid polypeptide reads, in one-letter code: C-C chemokine receptor type 10 (362 aa).

Residues 1–52 (MGTEATEQVSWGHYSGDEEDAYSAEPLPELCYKADVQAFSRAFQPSVSLTVA) are Extracellular-facing. Residues 53-68 (ALGLAGNGLVLATHLA) traverse the membrane as a helical segment. Over 69 to 78 (ARRAARSPTS) the chain is Cytoplasmic. The helical transmembrane segment at 79–99 (AHLLQLALADLLLALTLPFAA) threads the bilayer. Residues 100–114 (AGALQGWSLGSATCR) are Extracellular-facing. Residues C113 and C191 are joined by a disulfide bond. Residues 115–136 (TISGLYSASFHAGFLFLACISA) traverse the membrane as a helical segment. The Cytoplasmic segment spans residues 137–159 (DRYVAIARALPAGPRPSTPGRAH). A helical transmembrane segment spans residues 160-179 (LVSVIVWLLSLLLALPALLF). Over 180–203 (SQDGQREGQRRCRLIFPEGLTQTV) the chain is Extracellular. A helical transmembrane segment spans residues 204 to 225 (KGASAVAQVALGFALPLGVMVA). Residues 226–247 (CYALLGRTLLAARGPERRRALR) lie on the Cytoplasmic side of the membrane. The helical transmembrane segment at 248–269 (VVVALVAAFVVLQLPYSLALLL) threads the bilayer. Residues 270–290 (DTADLLAARERSCPASKRKDV) are Extracellular-facing. Residues 291–313 (ALLVTSGLALARCGLNPVLYAFL) form a helical membrane-spanning segment. The Cytoplasmic segment spans residues 314 to 362 (GLRFRQDLRRLLRGGSCPSGPQPRRGCPRRPRLSSCSAPTETHSLSWDN). The span at 328–338 (GSCPSGPQPRR) shows a compositional bias: low complexity. Positions 328–362 (GSCPSGPQPRRGCPRRPRLSSCSAPTETHSLSWDN) are disordered. The span at 351–362 (APTETHSLSWDN) shows a compositional bias: polar residues.

Belongs to the G-protein coupled receptor 1 family. Expressed at high levels in adult testis, small intestine, fetal lung, fetal kidney. Weaker expression was observed in many other adult tissues including spleen, thymus, lymph node, Peyer patches, colon, heart, ovary, peripheral blood lymphocytes, thyroid and spinal cord. Also expressed by melanocytes, dermal fibroblasts, dermal microvascular endothelial cells. Also detected in T-cells and in skin-derived Langerhans cells.

The protein localises to the cell membrane. Receptor for chemokines SCYA27 and SCYA28. Subsequently transduces a signal by increasing the intracellular calcium ions level and stimulates chemotaxis in a pre-B cell line. In Homo sapiens (Human), this protein is C-C chemokine receptor type 10 (CCR10).